Here is a 203-residue protein sequence, read N- to C-terminus: FMN-dependent NADH:quinone oxidoreductase (203 aa).

Residues serine 9, serine 15–serine 17, and serine 138–glycine 141 contribute to the FMN site.

This sequence belongs to the azoreductase type 1 family. As to quaternary structure, homodimer. The cofactor is FMN.

It carries out the reaction 2 a quinone + NADH + H(+) = 2 a 1,4-benzosemiquinone + NAD(+). It catalyses the reaction N,N-dimethyl-1,4-phenylenediamine + anthranilate + 2 NAD(+) = 2-(4-dimethylaminophenyl)diazenylbenzoate + 2 NADH + 2 H(+). Its function is as follows. Quinone reductase that provides resistance to thiol-specific stress caused by electrophilic quinones. Also exhibits azoreductase activity. Catalyzes the reductive cleavage of the azo bond in aromatic azo compounds to the corresponding amines. The chain is FMN-dependent NADH:quinone oxidoreductase from Methylorubrum extorquens (strain PA1) (Methylobacterium extorquens).